Consider the following 185-residue polypeptide: MLQAIYNETKDLMQKSIQALNRDFSTLRSAKVSVNILDHIKVDYYGTPTALNQVGSVMSLDATTLQISPWEKNLLKEIERSIQEANIGVNPNNDGETIKLFFPPMTTEQRKLIAKDAKAMGEKAKVAVRNTRQDANNKVKKLEKDKEISEDESKKAQEQIQKITDEAIKKIDESVKNKEDAILKV.

The segment at 128-158 (VRNTRQDANNKVKKLEKDKEISEDESKKAQE) is disordered.

This sequence belongs to the RRF family.

It is found in the cytoplasm. Its function is as follows. Responsible for the release of ribosomes from messenger RNA at the termination of protein biosynthesis. May increase the efficiency of translation by recycling ribosomes from one round of translation to another. In Helicobacter pylori (strain J99 / ATCC 700824) (Campylobacter pylori J99), this protein is Ribosome-recycling factor.